The sequence spans 334 residues: PDZ domain-containing protein MAGIX (334 aa).

Composition is skewed to basic and acidic residues over residues 1–13 (MEPRTGDAADPRG) and 209–224 (LETHPGKPRGVGEPRK). Disordered stretches follow at residues 1–26 (MEPRTGDAADPRGSRGGRGPSPLAGP) and 209–306 (LETH…WLVP). Residues 125-209 (SVELVRGYAG…QLHLVIRRPL (85 aa)) form the PDZ domain. Over residues 244-260 (GSRSSSTSLVQHPPSRT) the composition is skewed to polar residues. The residue at position 272 (S272) is a Phosphoserine.

This Homo sapiens (Human) protein is PDZ domain-containing protein MAGIX (MAGIX).